The primary structure comprises 347 residues: NADH-ubiquinone oxidoreductase chain 2 (347 aa).

10 helical membrane passes run 1–21 (MNPLTLSLVLTTMMAGTLIVM), 25–45 (HWFMIWVGFEMNMLAIIPLLT), 67–87 (SMLLMMAAITNLLYTGHWSIM), 111–131 (FHFWVPEVTQGIPLMSGLILL), 144–164 (MIMPLINTDILLIMSLMSIAI), 178–198 (IMAYSSIAHMGWMMAVLAYNP), 201–221 (TLLNLYIYIPMTITTFMLLMI), 237–257 (LPLITTLILITMLSLGGLPPL), 274–294 (SSIIMPTLMTLLALLNLYFYT), and 326–346 (LPLMIMISTLVPPLAPMMPIL).

This sequence belongs to the complex I subunit 2 family. As to quaternary structure, core subunit of respiratory chain NADH dehydrogenase (Complex I) which is composed of 45 different subunits. Interacts with TMEM242.

The protein localises to the mitochondrion inner membrane. The catalysed reaction is a ubiquinone + NADH + 5 H(+)(in) = a ubiquinol + NAD(+) + 4 H(+)(out). In terms of biological role, core subunit of the mitochondrial membrane respiratory chain NADH dehydrogenase (Complex I) which catalyzes electron transfer from NADH through the respiratory chain, using ubiquinone as an electron acceptor. Essential for the catalytic activity and assembly of complex I. This Myotis simus (Velvety myotis) protein is NADH-ubiquinone oxidoreductase chain 2.